A 379-amino-acid polypeptide reads, in one-letter code: tRNA-specific 2-thiouridylase MnmA (379 aa).

Residues 9–16 (GLSGGVDS) and methionine 35 contribute to the ATP site. The tract at residues 95-97 (NPD) is interaction with target base in tRNA. The active-site Nucleophile is cysteine 100. A disulfide bond links cysteine 100 and cysteine 198. Residue glycine 124 coordinates ATP. Residues 148–150 (KDQ) form an interaction with tRNA region. Cysteine 198 (cysteine persulfide intermediate) is an active-site residue. Positions 325–326 (RY) are interaction with tRNA.

Belongs to the MnmA/TRMU family.

It is found in the cytoplasm. The catalysed reaction is S-sulfanyl-L-cysteinyl-[protein] + uridine(34) in tRNA + AH2 + ATP = 2-thiouridine(34) in tRNA + L-cysteinyl-[protein] + A + AMP + diphosphate + H(+). In terms of biological role, catalyzes the 2-thiolation of uridine at the wobble position (U34) of tRNA, leading to the formation of s(2)U34. This chain is tRNA-specific 2-thiouridylase MnmA, found in Acidovorax sp. (strain JS42).